The sequence spans 4466 residues: Dynein beta chain, ciliary (4466 aa).

The tract at residues 1–1813 is stem; that stretch reads MGDVVDARLD…YANICDAQFK (1813 aa). 154–161 serves as a coordination point for ATP; the sequence is AGQVKGKT. 6 coiled-coil regions span residues 482-502, 627-643, 734-805, 1036-1056, 1306-1337, and 1443-1468; these read QEFL…DRRL, QKYE…EQKV, VLEV…WTKQ, TLDQ…EADE, WLEI…AWDA, and LLKS…MTSK. 4 AAA regions span residues 1814 to 2035, 2095 to 2316, 2422 to 2669, and 2767 to 3016; these read YSYE…VLVV, KVVK…IRFK, ELDP…VFQG, and TYNE…ERRY. Residues 1852–1859, 2133–2140, 2460–2467, and 2805–2812 each bind ATP; these read GPAGTGKT, GNAGTGKS, GNAGLGKS, and GVGGSGKQ. 3 coiled-coil regions span residues 3033-3134, 3263-3325, and 3573-3642; these read SLLA…AKAE, EPKR…SRTI, and QERP…EEAK. A stalk region spans residues 3033–3325; that stretch reads SLLAMKSKEL…QEAEATSRTI (293 aa). AAA regions lie at residues 3409-3636 and 3846-4072; these read LTDD…EISV and VRNF…VLYN.

It belongs to the dynein heavy chain family. In terms of assembly, consists of at least two heavy chains (alpha and beta), three intermediate chains and several light chains.

It localises to the cell projection. It is found in the cilium. The protein resides in the flagellum. Its subcellular location is the cytoplasm. The protein localises to the cytoskeleton. It localises to the flagellum axoneme. In terms of biological role, force generating protein of eukaryotic cilia and flagella. Produces force towards the minus ends of microtubules. Dynein has ATPase activity; the force-producing power stroke is thought to occur on release of ADP. The polypeptide is Dynein beta chain, ciliary (Heliocidaris crassispina (Sea urchin)).